The sequence spans 66 residues: Photosystem II reaction center protein J (66 aa).

Residues 1 to 23 are disordered; it reads MSGNKSPFPDGRIPDRLPDGRPA. A helical membrane pass occupies residues 37–57; sequence LWLVATAGGMAVLFVVGLFFY.

Belongs to the PsbJ family. PSII is composed of 1 copy each of membrane proteins PsbA, PsbB, PsbC, PsbD, PsbE, PsbF, PsbH, PsbI, PsbJ, PsbK, PsbL, PsbM, PsbT, PsbX, PsbY, PsbZ, Psb30/Ycf12, peripheral proteins PsbO, CyanoQ (PsbQ), PsbU, PsbV and a large number of cofactors. It forms dimeric complexes.

It localises to the cellular thylakoid membrane. Its function is as follows. One of the components of the core complex of photosystem II (PSII). PSII is a light-driven water:plastoquinone oxidoreductase that uses light energy to abstract electrons from H(2)O, generating O(2) and a proton gradient subsequently used for ATP formation. It consists of a core antenna complex that captures photons, and an electron transfer chain that converts photonic excitation into a charge separation. This is Photosystem II reaction center protein J from Parasynechococcus marenigrum (strain WH8102).